The primary structure comprises 189 residues: Putative OVARIAN TUMOR DOMAIN-containing deubiquitinating enzyme 8 (189 aa).

Residues M1–K103 enclose the OTU domain. The active site involves D5. C8 (nucleophile) is an active-site residue. The active site involves H96. Residues K105–E189 are disordered. The stretch at W120–R181 forms a coiled coil. 2 short sequence motifs (nuclear localization signal) span residues R125–K132 and K163–K170. Residues K126–E174 show a composition bias toward basic and acidic residues. The segment covering K175 to E189 has biased composition (basic residues).

It belongs to the peptidase C85 family.

The protein localises to the nucleus. The enzyme catalyses Thiol-dependent hydrolysis of ester, thioester, amide, peptide and isopeptide bonds formed by the C-terminal Gly of ubiquitin (a 76-residue protein attached to proteins as an intracellular targeting signal).. In terms of biological role, hydrolase that can remove conjugated ubiquitin from proteins in vitro and may therefore play an important regulatory role at the level of protein turnover by preventing degradation. The polypeptide is Putative OVARIAN TUMOR DOMAIN-containing deubiquitinating enzyme 8 (Arabidopsis thaliana (Mouse-ear cress)).